The primary structure comprises 157 residues: Baculoviral IAP repeat-containing protein 5.2-A (157 aa).

Residues 31–101 (RLRTFSNWPF…KHSPSCLFIA (71 aa)) form a BIR repeat. The residue at position 47 (T47) is a Phosphothreonine; by CDK1. 4 residues coordinate Zn(2+): C70, C73, H90, and C97.

Belongs to the IAP family. In terms of assembly, component of the CPC at least composed of survivin/birc5, incenp, cdca8/borealin and/or cdca9/dasra-A, and aurkb/aurora-B. Interacts directly with incenp (via N-terminus). Interacts with rxra; the interaction is stronger in the absence of 9-cis retinoic acids. In terms of processing, ubiquitination is required for centrosome-targeting. Highly expressed in vascular endothelial cells of tadpoles.

It is found in the cytoplasm. The protein resides in the nucleus. It localises to the chromosome. Its subcellular location is the centromere. The protein localises to the cytoskeleton. It is found in the spindle. In terms of biological role, component of the chromosomal passenger complex (CPC), a complex that acts as a key regulator of mitosis. The CPC complex has essential functions at the centromere in ensuring correct chromosome alignment and segregation and is required for chromatin-induced microtubule stabilization and spindle assembly. Does not appear to exhibit anti-apoptotic activity. Plays a role in increasing blood vessel size during development. In Xenopus laevis (African clawed frog), this protein is Baculoviral IAP repeat-containing protein 5.2-A (birc5.2-a).